We begin with the raw amino-acid sequence, 394 residues long: Elongation factor Tu (394 aa).

Positions 10–204 (KPHVNVGTIG…ALDSYIPEPE (195 aa)) constitute a tr-type G domain. Positions 19-26 (GHVDHGKT) are G1. 19 to 26 (GHVDHGKT) serves as a coordination point for GTP. Mg(2+) is bound at residue threonine 26. The G2 stretch occupies residues 60–64 (GITIN). Residues 81–84 (DCPG) form a G3 region. GTP contacts are provided by residues 81 to 85 (DCPGH) and 136 to 139 (NKCD). The G4 stretch occupies residues 136 to 139 (NKCD). Positions 174–176 (SAL) are G5.

It belongs to the TRAFAC class translation factor GTPase superfamily. Classic translation factor GTPase family. EF-Tu/EF-1A subfamily. As to quaternary structure, monomer.

It is found in the cytoplasm. It catalyses the reaction GTP + H2O = GDP + phosphate + H(+). GTP hydrolase that promotes the GTP-dependent binding of aminoacyl-tRNA to the A-site of ribosomes during protein biosynthesis. The chain is Elongation factor Tu from Sodalis glossinidius (strain morsitans).